The primary structure comprises 111 residues: Ribonuclease P protein component (111 aa).

This sequence belongs to the RnpA family. Consists of a catalytic RNA component (M1 or rnpB) and a protein subunit.

The catalysed reaction is Endonucleolytic cleavage of RNA, removing 5'-extranucleotides from tRNA precursor.. RNaseP catalyzes the removal of the 5'-leader sequence from pre-tRNA to produce the mature 5'-terminus. It can also cleave other RNA substrates such as 4.5S RNA. The protein component plays an auxiliary but essential role in vivo by binding to the 5'-leader sequence and broadening the substrate specificity of the ribozyme. The protein is Ribonuclease P protein component of Mycoplasmopsis pulmonis (strain UAB CTIP) (Mycoplasma pulmonis).